The chain runs to 737 residues: Elongation factor 2 (737 aa).

One can recognise a tr-type G domain in the interval 18–262 (TRVRNIGIIA…AVIKFVPNPR (245 aa)). GTP-binding positions include 27 to 34 (AHVDHGKT), 93 to 97 (DTPGH), and 147 to 150 (NKVD). A Diphthamide modification is found at H604.

The protein belongs to the TRAFAC class translation factor GTPase superfamily. Classic translation factor GTPase family. EF-G/EF-2 subfamily.

It is found in the cytoplasm. Catalyzes the GTP-dependent ribosomal translocation step during translation elongation. During this step, the ribosome changes from the pre-translocational (PRE) to the post-translocational (POST) state as the newly formed A-site-bound peptidyl-tRNA and P-site-bound deacylated tRNA move to the P and E sites, respectively. Catalyzes the coordinated movement of the two tRNA molecules, the mRNA and conformational changes in the ribosome. The polypeptide is Elongation factor 2 (fusA) (Sulfolobus acidocaldarius (strain ATCC 33909 / DSM 639 / JCM 8929 / NBRC 15157 / NCIMB 11770)).